The following is a 291-amino-acid chain: ATP synthase gamma chain (291 aa).

Belongs to the ATPase gamma chain family. In terms of assembly, F-type ATPases have 2 components, CF(1) - the catalytic core - and CF(0) - the membrane proton channel. CF(1) has five subunits: alpha(3), beta(3), gamma(1), delta(1), epsilon(1). CF(0) has three main subunits: a, b and c.

Its subcellular location is the cell inner membrane. Produces ATP from ADP in the presence of a proton gradient across the membrane. The gamma chain is believed to be important in regulating ATPase activity and the flow of protons through the CF(0) complex. This chain is ATP synthase gamma chain, found in Rhodopseudomonas palustris (strain BisB5).